A 1204-amino-acid chain; its full sequence is ATP-dependent helicase/nuclease subunit A (1204 aa).

The UvrD-like helicase ATP-binding domain maps to 2–469 (TKFTKEQNQA…IVLSDNFRST (468 aa)). An ATP-binding site is contributed by 23 to 30 (ASAGSGKT). Residues 496-784 (EGQLQFGATY…KLMTIHASKG (289 aa)) enclose the UvrD-like helicase C-terminal domain.

The protein belongs to the helicase family. AddA subfamily. Heterodimer of AddA and AddB/RexB. The cofactor is Mg(2+).

It carries out the reaction Couples ATP hydrolysis with the unwinding of duplex DNA by translocating in the 3'-5' direction.. It catalyses the reaction ATP + H2O = ADP + phosphate + H(+). The heterodimer acts as both an ATP-dependent DNA helicase and an ATP-dependent, dual-direction single-stranded exonuclease. Recognizes the chi site generating a DNA molecule suitable for the initiation of homologous recombination. The AddA nuclease domain is required for chi fragment generation; this subunit has the helicase and 3' -&gt; 5' nuclease activities. This is ATP-dependent helicase/nuclease subunit A from Lactobacillus johnsonii (strain CNCM I-12250 / La1 / NCC 533).